The following is a 1372-amino-acid chain: DNA-directed RNA polymerase subunit beta (1372 aa).

It belongs to the RNA polymerase beta chain family. In terms of assembly, the RNAP catalytic core consists of 2 alpha, 1 beta, 1 beta' and 1 omega subunit. When a sigma factor is associated with the core the holoenzyme is formed, which can initiate transcription.

The catalysed reaction is RNA(n) + a ribonucleoside 5'-triphosphate = RNA(n+1) + diphosphate. Functionally, DNA-dependent RNA polymerase catalyzes the transcription of DNA into RNA using the four ribonucleoside triphosphates as substrates. In Bradyrhizobium sp. (strain BTAi1 / ATCC BAA-1182), this protein is DNA-directed RNA polymerase subunit beta.